The sequence spans 293 residues: Glycine--tRNA ligase alpha subunit (293 aa).

Belongs to the class-II aminoacyl-tRNA synthetase family. As to quaternary structure, tetramer of two alpha and two beta subunits.

It localises to the cytoplasm. The catalysed reaction is tRNA(Gly) + glycine + ATP = glycyl-tRNA(Gly) + AMP + diphosphate. The protein is Glycine--tRNA ligase alpha subunit of Sulfurimonas denitrificans (strain ATCC 33889 / DSM 1251) (Thiomicrospira denitrificans (strain ATCC 33889 / DSM 1251)).